A 417-amino-acid chain; its full sequence is Serine hydroxymethyltransferase (417 aa).

(6S)-5,6,7,8-tetrahydrofolate is bound by residues Leu120 and 124–126 (GHL). Lys229 carries the N6-(pyridoxal phosphate)lysine modification.

It belongs to the SHMT family. In terms of assembly, homodimer. The cofactor is pyridoxal 5'-phosphate.

It localises to the cytoplasm. The catalysed reaction is (6R)-5,10-methylene-5,6,7,8-tetrahydrofolate + glycine + H2O = (6S)-5,6,7,8-tetrahydrofolate + L-serine. The protein operates within one-carbon metabolism; tetrahydrofolate interconversion. It participates in amino-acid biosynthesis; glycine biosynthesis; glycine from L-serine: step 1/1. Its function is as follows. Catalyzes the reversible interconversion of serine and glycine with tetrahydrofolate (THF) serving as the one-carbon carrier. This reaction serves as the major source of one-carbon groups required for the biosynthesis of purines, thymidylate, methionine, and other important biomolecules. Also exhibits THF-independent aldolase activity toward beta-hydroxyamino acids, producing glycine and aldehydes, via a retro-aldol mechanism. The chain is Serine hydroxymethyltransferase from Anaeromyxobacter sp. (strain K).